The chain runs to 100 residues: MARKSLIQREKKRQKLEEKYHLIRRSSKKEISKVSSLDEKWEIHVKLQSPPRNSAPIRLHRRCFLTGRPRANYRDFGLSGHVLREMVHACLLPGATRSSW.

The protein belongs to the universal ribosomal protein uS14 family. As to quaternary structure, part of the 30S ribosomal subunit.

Its subcellular location is the plastid. The protein resides in the chloroplast. In terms of biological role, binds 16S rRNA, required for the assembly of 30S particles. The sequence is that of Small ribosomal subunit protein uS14c from Nymphaea alba (White water-lily).